The chain runs to 582 residues: ATP-dependent lipid A-core flippase (582 aa).

Transmembrane regions (helical) follow at residues 16–36 (LWPT…ALIL), 64–84 (LMWM…TSYI), 153–173 (IIGL…ILIV), 253–273 (PIIQ…ASFP), and 275–295 (VMDS…IALM). The ABC transmembrane type-1 domain maps to 28-310 (IVAGVALILN…LTNVNAQFQR (283 aa)). Positions 342 to 578 (VEFRNVTFTY…RGVYAQLHKM (237 aa)) constitute an ABC transporter domain. 376–383 (GRSGSGKS) provides a ligand contact to ATP.

The protein belongs to the ABC transporter superfamily. Lipid exporter (TC 3.A.1.106) family. In terms of assembly, homodimer.

The protein localises to the cell inner membrane. It catalyses the reaction ATP + H2O + lipid A-core oligosaccharideSide 1 = ADP + phosphate + lipid A-core oligosaccharideSide 2.. Its function is as follows. Involved in lipopolysaccharide (LPS) biosynthesis. Translocates lipid A-core from the inner to the outer leaflet of the inner membrane. Transmembrane domains (TMD) form a pore in the inner membrane and the ATP-binding domain (NBD) is responsible for energy generation. This Escherichia coli O6:K15:H31 (strain 536 / UPEC) protein is ATP-dependent lipid A-core flippase.